The chain runs to 522 residues: MKTTIDMQVLYVTCTVLAALILGYIQAMIIYRLWFHPLSKYPGPWLARISNLYSAYYAWSGDLHIDMWRCHQKYGDFVRYAPNRLLVNTNTGLKAIYGFNKHVQKSTTYNVMVHRAPSSLTMTDPQESAQRRRIVGQGFSSTAINQYESIIMEHVQRLATQLVRRGSDRGSGWSAAQNMSDWGNHFSFDVISDIVFGARHETIGKPDNRYVLGCIDGANIRTSVLFQAAELTFGRVDRYLFPKSIESRNRFTPFVSSLVRTRLQSHDASRNDAFSLLVRAKDPETSEGLSMDAIGGECTTLVMAGSDITSTVIASTLFYLSTHTESYDRVKSELQQAFPTADDVRLGHRLNSCRYLRACIEESLRLSPPVGGAPWRRVVSDGLLVDGQSIPAGCDVGTSVYALHHNSAYFKAPFVFRPSRWLTDSGAQGRESRDIRLAQSAFAPFSIGPRSCLGKGMAYAELTLVLATLLSKYDMRAAEGPMRGIGGGRVGAPWGRHRENEFQLTGHVTSAKTGPYVEFKKS.

A helical membrane pass occupies residues 10 to 30 (LYVTCTVLAALILGYIQAMII). Cys-452 contacts heme.

It belongs to the cytochrome P450 family. Requires heme as cofactor.

It is found in the membrane. The protein operates within mycotoxin biosynthesis. In terms of biological role, cytochrome P450 monooxygenase; part of the gene clusters that mediate the biosynthesis of the host-selective toxins (HSTs) AK-toxins responsible for Japanese pear black spot disease by the Japanese pear pathotype. AK-toxins are esters of 9,10-epoxy 8-hydroxy 9-methyldecatrienoic acid (EDA). On cellular level, AK-toxins affect plasma membrane of susceptible cells and cause a sudden increase in loss of K(+) after a few minutes of toxin treatment. The acyl-CoA ligase AKT1, the hydrolase AKT2 and enoyl-CoA hydratase AKT3 are all involved in the biosynthesis of the AK-, AF- and ACT-toxin common 9,10-epoxy-8-hydroxy-9-methyl-decatrienoic acid (EDA) structural moiety. Part of the EDA biosynthesis occurs in the peroxisome since these 3 enzymes are localized in peroxisomes. The exact roles of the 3 enzymes, as well as of additional AK-toxin clusters enzymes, including AKT4, AKT6 and AKTS1, have still to be elucidated. The Cytochrome P450 monooxygenase AKT7 on the other side functions to limit production of EDA and AK-toxin, probably via the catalysis of a side reaction of EDA or its precursor. The protein is Cytochrome P450 monooxygenase AKT7 of Alternaria alternata (Alternaria rot fungus).